The sequence spans 311 residues: Olfactory receptor 5L1 (311 aa).

At 1 to 25 (MGKENCTTVAEFILLGLSDVPELRV) the chain is on the extracellular side. Residue N5 is glycosylated (N-linked (GlcNAc...) asparagine). A helical membrane pass occupies residues 26-46 (CLFLLFLLIYGVTLLANLGMI). Topologically, residues 47–54 (ALIQVSSR) are cytoplasmic. A helical transmembrane segment spans residues 55 to 75 (LHTPMYFFLSHLSSVDFCYSS). The Extracellular portion of the chain corresponds to 76–99 (IIVPKMLANIFNKDKAISFLGCMV). C97 and C189 are joined by a disulfide. A helical transmembrane segment spans residues 100 to 120 (QFYLFCTCVVTEVFLLAVMAY). Topologically, residues 121–139 (DRFVAICNPLLYTVTMSWK) are cytoplasmic. The helical transmembrane segment at 140–160 (VRVELASCCYFCGTVCSLIHL) threads the bilayer. The Extracellular portion of the chain corresponds to 161 to 196 (CLALRIPFYRSNVINHFFCDLPPVLSLACSDITVNE). A glycan (N-linked (GlcNAc...) asparagine) is linked at N195. A helical transmembrane segment spans residues 197–217 (TLLFLVATLNESVTIMIILTS). The Cytoplasmic segment spans residues 218-237 (YLLILTTILKMGSAEGRHKA). A helical transmembrane segment spans residues 238 to 258 (FSTCASHLTAITVFHGTVLSI). Residues 259–271 (YCRPSSGNSGDAD) are Extracellular-facing. A helical membrane pass occupies residues 272–292 (KVATVFYTVVIPMLNSVIYSL). Topologically, residues 293-311 (RNKDVKEALRKVMGSKIHS) are cytoplasmic.

The protein belongs to the G-protein coupled receptor 1 family.

It is found in the cell membrane. Odorant receptor. The polypeptide is Olfactory receptor 5L1 (OR5L1) (Homo sapiens (Human)).